A 340-amino-acid chain; its full sequence is Tryptophan--tRNA ligase (340 aa).

Residues 11–13 and 19–20 contribute to the ATP site; these read RPT and GH. The short motif at 12 to 20 is the 'HIGH' region element; that stretch reads PTGKLHLGH. D140 is an L-tryptophan binding site. ATP is bound by residues 152–154, L194, and 202–206; these read GND and KMSKS. The 'KMSKS' region motif lies at 202–206; it reads KMSKS.

This sequence belongs to the class-I aminoacyl-tRNA synthetase family. Homodimer.

Its subcellular location is the cytoplasm. The enzyme catalyses tRNA(Trp) + L-tryptophan + ATP = L-tryptophyl-tRNA(Trp) + AMP + diphosphate + H(+). Its function is as follows. Catalyzes the attachment of tryptophan to tRNA(Trp). This Streptococcus pyogenes serotype M3 (strain ATCC BAA-595 / MGAS315) protein is Tryptophan--tRNA ligase.